Consider the following 331-residue polypeptide: MPDTMVTTDVIKSAVQLACRAPSLHNSQPWRWIAEDHTVALFLDKDRVLYATDHSGREALLGCGAVLDHFRVAMAAAGTTANVERFPNPNDPLHLASIDFSPADFVTEGHRLRADAILLRRTDRLPFAEPPDWDLVESQLRTTVTADTVRIDVIADDMRPELAAASKLTESLRLYDSSYHAELFWWTGAFETSEGIPHSSLVSAAESDRVTFGRDFPVVANTDRRPEFGHDRSKVLVLSTYDNERASLLRCGEMLSAVLLDATMAGLATCTLTHITELHASRDLVAALIGQPATPQALVRVGLAPEMEEPPPATPRRPIDEVFHVRAKDHR.

Residues 28–32 (QPWRW) and arginine 316 each bind FMN.

It belongs to the nitroreductase family. Requires FMN as cofactor.

The protein is Putative NAD(P)H nitroreductase acg (acg) of Mycobacterium tuberculosis (strain CDC 1551 / Oshkosh).